Here is a 559-residue protein sequence, read N- to C-terminus: ADP,ATP carrier protein 1 (559 aa).

Residues 1–10 show a composition bias toward polar residues; sequence MNEVENNNHS. Residues 1–22 form a disordered region; that stretch reads MNEVENNNHSFPREDIPTEDEI. Asparagine 8 carries N-linked (GlcNAc...) asparagine glycosylation. Helical transmembrane passes span 46–66, 79–99, 111–131, and 174–194; these read FALL…MRIL, TILF…VFLI, IFSI…AVFL, and IVFI…FLSF. Residue asparagine 196 is glycosylated (N-linked (GlcNAc...) asparagine). 2 helical membrane passes run 210–230 and 242–262; these read PLII…GAFF and QVLL…VIFL. Residue asparagine 290 is glycosylated (N-linked (GlcNAc...) asparagine). A run of 3 helical transmembrane segments spans residues 305 to 325, 354 to 373, and 377 to 397; these read LLLA…MVES, QYMT…SSYV, and GFLL…VLFL. Asparagine 403 carries N-linked (GlcNAc...) asparagine glycosylation. A run of 3 helical transmembrane segments spans residues 425–447, 473–493, and 503–523; these read YVLE…YSAF, IFGK…FEAL, and PITA…IIYL.

It belongs to the ADP/ATP translocase tlc family.

It is found in the cell membrane. In terms of biological role, ATP transporter involved in the uptake of ATP from the host cell cytoplasm. Provides the microsporidian cell with host ATP in exchange for ADP. This is an obligate exchange system. This energy acquiring activity is an important component of microsporidian parasitism. This chain is ADP,ATP carrier protein 1 (NTT1), found in Encephalitozoon cuniculi (strain GB-M1) (Microsporidian parasite).